The primary structure comprises 67 residues: DNA-directed RNA polymerase subunit omega (67 aa).

This sequence belongs to the RNA polymerase subunit omega family. The RNAP catalytic core consists of 2 alpha, 1 beta, 1 beta' and 1 omega subunit. When a sigma factor is associated with the core the holoenzyme is formed, which can initiate transcription.

The enzyme catalyses RNA(n) + a ribonucleoside 5'-triphosphate = RNA(n+1) + diphosphate. In terms of biological role, promotes RNA polymerase assembly. Latches the N- and C-terminal regions of the beta' subunit thereby facilitating its interaction with the beta and alpha subunits. The sequence is that of DNA-directed RNA polymerase subunit omega from Nautilia profundicola (strain ATCC BAA-1463 / DSM 18972 / AmH).